A 426-amino-acid polypeptide reads, in one-letter code: MLTIKDIHALEVMDSRGNPTIQASVILSDNTKASAIVPSGASTGKREALELRDNDKTRFLGKGVLRACENVNSVIKHHLIGLEATNQAFVDERLRALDGTPNYANLGANAVLGVSMALARASAKALNLPLYRYLGGANALTLPVPMLNIINGGTHANNSIDFQEYMIMPLGFESFKEALRASAEVYHTLKKLLDEKNQLTSVGDEGGFAPNFNNNVEPLEIISQAIEKAGYKLGEEIALALDVASSELVDEHFNYHLKGENKILDSHELVAYYKELVAKYPIVSIEDGLSEDDWEGWAFLSKELGRQIQLVGDDLFVTNASILQKGIEKNVANAILIKPNQIGTISETLETIRLAKHHAYQCVISHRSGESEDSFIADFAVALNTGEIKTGSTARSERIAKYNRLLEIEHELKGGIYIGKELFKHG.

Gln163 provides a ligand contact to (2R)-2-phosphoglycerate. Glu205 acts as the Proton donor in catalysis. Mg(2+)-binding residues include Asp242, Glu286, and Asp313. The (2R)-2-phosphoglycerate site is built by Lys338, Arg367, Ser368, and Lys389. Lys338 serves as the catalytic Proton acceptor.

The protein belongs to the enolase family. The cofactor is Mg(2+).

The protein resides in the cytoplasm. The protein localises to the secreted. It localises to the cell surface. The enzyme catalyses (2R)-2-phosphoglycerate = phosphoenolpyruvate + H2O. Its pathway is carbohydrate degradation; glycolysis; pyruvate from D-glyceraldehyde 3-phosphate: step 4/5. In terms of biological role, catalyzes the reversible conversion of 2-phosphoglycerate (2-PG) into phosphoenolpyruvate (PEP). It is essential for the degradation of carbohydrates via glycolysis. This Helicobacter pylori (strain J99 / ATCC 700824) (Campylobacter pylori J99) protein is Enolase.